A 491-amino-acid polypeptide reads, in one-letter code: Protein OrfX3 (491 aa).

The protein belongs to the TULIP P47 family. In terms of assembly, heterodimer of OrfX1 and OrfX3; crystallizes as a dimer of heterodimers.

Functionally, expression of the ptox operon (ntnh-orfX1-orfX2-orfX3-pmp1) in B.thuringiensis kills Anopheles but not Aedes mosquito 3rd instar larvae. The ntnh-pmp1 construct is about half as toxic. This Paraclostridium bifermentans (Clostridium bifermentans) protein is Protein OrfX3.